The sequence spans 2531 residues: Putative neurobeachin homolog (2531 aa).

3 stretches are compositionally biased toward acidic residues: residues 1–10 (MDISETEYND), 26–35 (EDEVNDEESN), and 62–74 (EPSD…EESE). 4 disordered regions span residues 1–101 (MDIS…SPPP), 1363–1398 (NDGD…DNGG), 1420–1440 (EELK…MPPQ), and 1642–1670 (RFVP…EISE). Positions 1363 to 1379 (NDGDHASIKNGSDHSEN) are enriched in basic and acidic residues. Residues 1427 to 1440 (QSNGRRPSTLMPPQ) are compositionally biased toward polar residues. A compositionally biased stretch (basic and acidic residues) spans 1650–1670 (SRHEEANLPEGEKNEEPEISE). The BEACH-type PH domain maps to 1714-1822 (PSSQSACFST…TVRKVVYQLP (109 aa)). The 290-residue stretch at 1841 to 2130 (MTPRQLFKHS…QLLAEAHPPR (290 aa)) folds into the BEACH domain. WD repeat units follow at residues 2289–2332 (GHGD…GFIA), 2350–2389 (GHEA…LRRI), 2429–2468 (LSEE…KLYT), and 2471–2510 (PLNS…WHYE).

The protein belongs to the WD repeat neurobeachin family. Interacts with RII subunit of PKA.

The protein resides in the cytoplasm. It localises to the membrane. The protein localises to the nucleus. In terms of biological role, binds to type II regulatory subunits of protein kinase A and anchors/targets them to the membrane. May anchor the kinase to cytoskeletal and/or organelle-associated proteins. Regulates endosomal traffic in polarized epithelial cells such as the vulval precursor cells and intestinal cells. Thought to act as a negative regulator of lin-12 activity in vulval precursor cells. May have a role in the internalization process from basolateral surface of polarized epithelial cells. The chain is Putative neurobeachin homolog from Caenorhabditis briggsae.